The following is a 94-amino-acid chain: Scorpine (94 aa).

Positions 1 to 19 are cleaved as a signal peptide; it reads MNSKLTALIFLGLIAIAYC. The BetaSPN-type CS-alpha/beta domain maps to 55–94; it reads EFQCMANMDMLGNCEKHCQTSGEKGYCHGTKCKCGTPLSY. Cystine bridges form between cysteine 58–cysteine 81, cysteine 68–cysteine 86, and cysteine 72–cysteine 88.

It belongs to the long chain scorpion toxin family. Class 3 subfamily. Expressed by the venom gland.

Its subcellular location is the secreted. It localises to the target cell membrane. In terms of biological role, this full-length protein shows antibacterial activity against B.subtilis and K.pneumoniae. Also shows a potent inhibitory effect on the ookinete (ED(50) 0.7 uM) and gamete (ED(50) 10 uM) stages of Plasmodium berghei development. In addition, induces cell membrane disruption, leakage currents and cell death on HEK293 cell line (tested at 25 uM). The chain is Scorpine from Pandinus imperator (Emperor scorpion).